Here is a 445-residue protein sequence, read N- to C-terminus: MEVVLHEGDAKDWVYKGEGAANLILSYTGSSPSMLGKVLRVKKILKDKGQPAPNCIVFSSHEEHLWGKIPGLLESVKNDCLPQAYATIVMSQHLGANHVDGGVRVRVSKNFFELAGKNVLDNRPAWRVNASAIDAGADSALLISDHTLFSGNPRGSSCIAVEIKAKCGFLPSSEYISKENSIKKQVTRYKMHQHLKFHLGEISKTSEYDPLDLFSGSKERIHMAIKSFFSTPQNNFRIFVDGSLVFGGMGGGADSVHPNETEKCLEDLSKVTGLQLSDFIELLSEAIFKSGVLGKLLATQKLDDHDIEGAIHLYYNIISQPCLVCKSITDTELLRKYSTLHSLPLDKSEKIVRDFLISATAKDCSLMISFRPRQSGTTDSEYDSVFLDSVNQSYDYKAYFIDLDVKPLDKMVHYFKLDQKIVNFYTRNGEVGGDPRDPPKGCGPR.

ATP is bound by residues 19–22 (GAAN) and R40. Substrate is bound at residue R127. ATP is bound by residues 144-146 (SDH) and 162-164 (EIK). Residues 162 to 166 (EIKAK) carry the EXKPK motif motif. Substrate-binding residues include K166, K196, and N234. Residue R237 coordinates ATP. Zn(2+) contacts are provided by H312, C322, C325, and H341. D363 serves as a coordination point for substrate. Residue D402 coordinates ATP. The substrate site is built by K406, K410, and Y414.

This sequence belongs to the IPK1 type 2 family. It depends on Zn(2+) as a cofactor.

The catalysed reaction is 1D-myo-inositol 1,3,4,5,6-pentakisphosphate + ATP = 1D-myo-inositol hexakisphosphate + ADP + H(+). Functionally, phosphorylates Ins(1,3,4,5,6)P5 at position 2 to form Ins(1,2,3,4,5,6)P6 (InsP6 or phytate). Phytate is a regulator of intracellular signaling, a highly abundant animal antinutrient, and a phosphate store in plant seeds. Also phosphorylates Ins(1,3,4,6)P4 and Ins(1,4,5,6)P4 to produce Ins(1,2,3,4,6)P5 and Ins(1,2,4,5,6)P5. The polypeptide is Inositol-pentakisphosphate 2-kinase IPK1 (Oryza sativa subsp. indica (Rice)).